Here is a 707-residue protein sequence, read N- to C-terminus: Kinesin-like protein KIN-13B (707 aa).

A Kinesin motor domain is found at 152-477; the sequence is KIKVVVRKRP…LRYADRVKSL (326 aa). 243 to 250 is an ATP binding site; it reads GQTGSGKT. A coiled-coil region spans residues 619-656; that stretch reads EHLNELLQEEEDLVSAHRKQVEETLDMIKEEMNLLVEA.

Belongs to the TRAFAC class myosin-kinesin ATPase superfamily. Kinesin family. KIN-13 subfamily.

The chain is Kinesin-like protein KIN-13B from Oryza sativa subsp. japonica (Rice).